Here is a 452-residue protein sequence, read N- to C-terminus: MQSIFGTDGIRGRFDKEITYSLAYKVGYALGFIVKTNNPILIGRDTRISGEILFEAISKGIKDAGKEFIYLGICPTPAIPFLIKKEKFSSGIMISASHNPPEFNGIKIFDKNGEKIKRDFEKRIELIMARVDNNKIITNKYKSVSKNNELLNIYTKGLIDSMENENLEGMKIILDACYGSATTCAESVFKKLGANVKVINNDKDGLKINLNCGSTCLDPLNKAIKENDADMGFSFDGDADRVIGVDSKGNILDGDHILFLWGRELLEEKVLTNNTIISTRMANLGFERNWNNIGGILYRTEVGDKFIFAALKEKKALLGGEQSGHILSKINNFCGDGILTALQISKYCKKKNINLESWLNSSFLPYPQKLTNILLSFDFKNINNSNKDLINESIESFSSIKKNDCRVYIRPSGTEPVLRILVEAQNQKEVDFLSTKITTELRSKINKISNNL.

S97 (phosphoserine intermediate) is an active-site residue. Mg(2+) is bound by residues S97, D236, D238, and D240. At S97 the chain carries Phosphoserine.

Belongs to the phosphohexose mutase family. Mg(2+) serves as cofactor. Post-translationally, activated by phosphorylation.

The enzyme catalyses alpha-D-glucosamine 1-phosphate = D-glucosamine 6-phosphate. Its function is as follows. Catalyzes the conversion of glucosamine-6-phosphate to glucosamine-1-phosphate. The protein is Phosphoglucosamine mutase of Prochlorococcus marinus (strain MIT 9515).